The chain runs to 448 residues: UDP-N-acetylmuramoylalanine--D-glutamate ligase (448 aa).

The UDP-N-acetyl-alpha-D-muramoyl-L-alanine site is built by K17, S18, T38, R39, and G78. 116 to 122 (GSNAKST) is a binding site for ATP. Residues A119, K120, S121, and T122 each contribute to the ADP site. N143 and H188 together coordinate UDP-N-acetyl-alpha-D-muramoyl-L-alanine. N278, R309, D324, and K326 together coordinate ADP.

The protein belongs to the MurCDEF family.

The protein resides in the cytoplasm. The catalysed reaction is UDP-N-acetyl-alpha-D-muramoyl-L-alanine + D-glutamate + ATP = UDP-N-acetyl-alpha-D-muramoyl-L-alanyl-D-glutamate + ADP + phosphate + H(+). Its pathway is cell wall biogenesis; peptidoglycan biosynthesis. In terms of biological role, involved in cell wall formation. Catalyzes the addition of D-glutamate to the peptidoglycan precursor UDP-N-acetylmuramoyl-L-alanine (UMA). The protein is UDP-N-acetylmuramoylalanine--D-glutamate ligase of Pseudomonas aeruginosa (strain ATCC 15692 / DSM 22644 / CIP 104116 / JCM 14847 / LMG 12228 / 1C / PRS 101 / PAO1).